The sequence spans 931 residues: GPI ethanolamine phosphate transferase 1 (931 aa).

Position 1 (methionine 1) is a topological domain, cytoplasmic. The chain crosses the membrane as a helical span at residues 2 to 24; it reads LLFFTLGLLIHFVFFASIFDIYF. Residues 25-442 are Lumenal-facing; the sequence is TSPLVHGMTP…SYYHTYDRFF (418 aa). Residues asparagine 128, asparagine 192, and asparagine 350 are each glycosylated (N-linked (GlcNAc...) asparagine). A helical transmembrane segment spans residues 443–463; the sequence is LGVNVVIGFVGWISYASLLII. The Cytoplasmic segment spans residues 464 to 482; sequence KSHSNLIKGVSKEVKKPSH. The helical transmembrane segment at 483-503 threads the bilayer; that stretch reads LLPCSFVAIGILVAFFLLIQA. The Lumenal segment spans residues 504–508; sequence CPWTY. A helical membrane pass occupies residues 509 to 529; it reads YVYGLLPLPIWYAVLREFQVI. Residues 530–543 are Cytoplasmic-facing; the sequence is QDLVVSVLTYPLSH. Residues 544–564 traverse the membrane as a helical segment; it reads FVGYLLAFTLGIEVLVLSFFY. Residue arginine 565 is a topological domain, lumenal. A helical transmembrane segment spans residues 566–586; that stretch reads YMLTAGLTAFAAWPFLTRLWT. The Cytoplasmic segment spans residues 587–591; sequence RAKMT. Residues 592 to 612 traverse the membrane as a helical segment; the sequence is SLSWTFFSLLLAVFPLMPVVG. Residues 613–618 lie on the Lumenal side of the membrane; that stretch reads RKPDIS. The helical transmembrane segment at 619–639 threads the bilayer; sequence LVMGAGLLVLLLSLCVVTSLM. The Cytoplasmic portion of the chain corresponds to 640–649; it reads KRKDSFIKEE. The helical transmembrane segment at 650–670 threads the bilayer; that stretch reads LLVHLLQVLSTVLSMYVVYST. Over 671–685 the chain is Lumenal; it reads QSSLLRKQGLPLMNQ. Residues 686–706 traverse the membrane as a helical segment; that stretch reads IISWATLASSLVVPLLSSPVL. Residues 707 to 723 are Cytoplasmic-facing; sequence FQRLFSILLSLMSTYLL. A helical transmembrane segment spans residues 724 to 744; the sequence is LSTGYEALFPLVLSCLMFVWI. Residues 745–786 lie on the Lumenal side of the membrane; sequence NIEQETLQQSGVCCKQKLTSIQFSYNTDITQFRQLYLDDIRR. A helical transmembrane segment spans residues 787-807; sequence AFFLVFFLVTAFFGTGNIASI. At 808–824 the chain is on the cytoplasmic side; that stretch reads NSFDLASVYCFLTVFSP. A helical membrane pass occupies residues 825 to 845; that stretch reads FMMGALMMWKILIPFVLVMCA. Residues 846–858 lie on the Lumenal side of the membrane; it reads FEAVQLTTQLSSK. A helical transmembrane segment spans residues 859-879; it reads SLFLIVLVISDIMALHFFFLV. Topologically, residues 880-894 are cytoplasmic; it reads KDYGSWLDIGTSISH. Residues 895 to 915 traverse the membrane as a helical segment; it reads YVIVMSMTIFLVFLNGLAQLL. Residues 916 to 931 are Lumenal-facing; that stretch reads TTKKLRLCGKPKSHFM.

It belongs to the PIGG/PIGN/PIGO family. PIGN subfamily.

It localises to the endoplasmic reticulum membrane. It functions in the pathway glycolipid biosynthesis; glycosylphosphatidylinositol-anchor biosynthesis. In terms of biological role, ethanolamine phosphate transferase that catalyzes an ethanolamine phosphate (EtNP) transfer from phosphatidylethanolamine (PE) to the 2-OH position of the first alpha-1,4-linked mannose of the alpha-D-Man-(1-&gt;6)-alpha-D-Man-(1-&gt;4)-alpha-D-GlcN-(1-&gt;6)-(1-radyl,2-acyl-sn-glycero-3-phospho)-2-acyl-inositol (also termed H3) intermediate to generate an alpha-D-Man-(1-&gt;6)-2-PEtn-alpha-D-Man-(1-&gt;4)-alpha-D-GlcN-(1-&gt;6)-(1-radyl,2-acyl-sn-glycero-3-phospho)-2-acyl-inositol and participates in the eighth step of the glycosylphosphatidylinositol-anchor biosynthesis. May act as suppressor of replication stress and chromosome missegregation. In Homo sapiens (Human), this protein is GPI ethanolamine phosphate transferase 1.